Reading from the N-terminus, the 445-residue chain is ATP synthase subunit b-delta (445 aa).

The tract at residues 1–168 (MSIFIGQLIG…PSSVVIDTAA (168 aa)) is ATP synthase subunit b. Residues 3–23 (IFIGQLIGFAVIAFIIVKWVV) form a helical membrane-spanning segment. The ATP synthase subunit delta stretch occupies residues 169–445 (TSRLRAASRQ…LAAAQTGLPD (277 aa)).

It in the N-terminal section; belongs to the ATPase B chain family. In the C-terminal section; belongs to the ATPase delta chain family. F-type ATPases have 2 components, F(1) - the catalytic core - and F(0) - the membrane proton channel. F(1) has five subunits: alpha(3), beta(3), gamma(1), delta(1), epsilon(1). F(0) has three main subunits: a(1), b(2) and c(10-14). The alpha and beta chains form an alternating ring which encloses part of the gamma chain. F(1) is attached to F(0) by a central stalk formed by the gamma and epsilon chains, while a peripheral stalk is formed by the delta and b chains.

It is found in the cell membrane. In terms of biological role, f(1)F(0) ATP synthase produces ATP from ADP in the presence of a proton or sodium gradient. F-type ATPases consist of two structural domains, F(1) containing the extramembraneous catalytic core and F(0) containing the membrane proton channel, linked together by a central stalk and a peripheral stalk. During catalysis, ATP synthesis in the catalytic domain of F(1) is coupled via a rotary mechanism of the central stalk subunits to proton translocation. This fusion protein includes a component of the F(0) channel (subunit b) and of the F(1) subunit (subunit delta). Two copies of subunit b and one of delta together form the peripheral 'stator' stalk which links F(1) to F(0). This chain is ATP synthase subunit b-delta (atpFH), found in Mycolicibacterium smegmatis (strain ATCC 700084 / mc(2)155) (Mycobacterium smegmatis).